The primary structure comprises 491 residues: Acetyl-coenzyme A carboxylase carboxyl transferase subunit beta (491 aa).

The CoA carboxyltransferase N-terminal domain occupies 132–491; the sequence is LWNQCENCFI…ISELLNLHAL (360 aa). The Zn(2+) site is built by cysteine 136, cysteine 139, cysteine 155, and cysteine 158. The C4-type zinc finger occupies 136–158; the sequence is CENCFIPNYKKVLKSNMQICEEC. The span at 252–262 shows a compositional bias: basic and acidic residues; the sequence is EKVEEWTKPDL. Disordered regions lie at residues 252–273 and 279–298; these read EKVEEWTKPDLDEGEESQDEER and DKGEESQEIEDSEANDEDDD. Positions 284–298 are enriched in acidic residues; it reads SQEIEDSEANDEDDD.

This sequence belongs to the AccD/PCCB family. In terms of assembly, acetyl-CoA carboxylase is a heterohexamer composed of biotin carboxyl carrier protein, biotin carboxylase and 2 subunits each of ACCase subunit alpha and ACCase plastid-coded subunit beta (accD). Zn(2+) is required as a cofactor.

It localises to the plastid. The enzyme catalyses N(6)-carboxybiotinyl-L-lysyl-[protein] + acetyl-CoA = N(6)-biotinyl-L-lysyl-[protein] + malonyl-CoA. Its pathway is lipid metabolism; malonyl-CoA biosynthesis; malonyl-CoA from acetyl-CoA: step 1/1. In terms of biological role, component of the acetyl coenzyme A carboxylase (ACC) complex. Biotin carboxylase (BC) catalyzes the carboxylation of biotin on its carrier protein (BCCP) and then the CO(2) group is transferred by the transcarboxylase to acetyl-CoA to form malonyl-CoA. This Cuscuta gronovii (Common dodder) protein is Acetyl-coenzyme A carboxylase carboxyl transferase subunit beta.